A 149-amino-acid polypeptide reads, in one-letter code: Deoxyuridine 5'-triphosphate nucleotidohydrolase (149 aa).

Residues 68–70 (RSG), Asn81, and 85–87 (LID) contribute to the substrate site.

It belongs to the dUTPase family. The cofactor is Mg(2+).

The catalysed reaction is dUTP + H2O = dUMP + diphosphate + H(+). The protein operates within pyrimidine metabolism; dUMP biosynthesis; dUMP from dCTP (dUTP route): step 2/2. Its function is as follows. This enzyme is involved in nucleotide metabolism: it produces dUMP, the immediate precursor of thymidine nucleotides and it decreases the intracellular concentration of dUTP so that uracil cannot be incorporated into DNA. In Azoarcus sp. (strain BH72), this protein is Deoxyuridine 5'-triphosphate nucleotidohydrolase.